Reading from the N-terminus, the 232-residue chain is Phosphatidylserine decarboxylase proenzyme (232 aa).

Serine 190 functions as the Schiff-base intermediate with substrate; via pyruvic acid in the catalytic mechanism. Serine 190 is modified (pyruvic acid (Ser); by autocatalysis).

Belongs to the phosphatidylserine decarboxylase family. PSD-A subfamily. In terms of assembly, heterodimer of a large membrane-associated beta subunit and a small pyruvoyl-containing alpha subunit. It depends on pyruvate as a cofactor. Post-translationally, is synthesized initially as an inactive proenzyme. Formation of the active enzyme involves a self-maturation process in which the active site pyruvoyl group is generated from an internal serine residue via an autocatalytic post-translational modification. Two non-identical subunits are generated from the proenzyme in this reaction, and the pyruvate is formed at the N-terminus of the alpha chain, which is derived from the carboxyl end of the proenzyme. The post-translation cleavage follows an unusual pathway, termed non-hydrolytic serinolysis, in which the side chain hydroxyl group of the serine supplies its oxygen atom to form the C-terminus of the beta chain, while the remainder of the serine residue undergoes an oxidative deamination to produce ammonia and the pyruvoyl prosthetic group on the alpha chain.

It is found in the cell membrane. The enzyme catalyses a 1,2-diacyl-sn-glycero-3-phospho-L-serine + H(+) = a 1,2-diacyl-sn-glycero-3-phosphoethanolamine + CO2. It participates in phospholipid metabolism; phosphatidylethanolamine biosynthesis; phosphatidylethanolamine from CDP-diacylglycerol: step 2/2. Its function is as follows. Catalyzes the formation of phosphatidylethanolamine (PtdEtn) from phosphatidylserine (PtdSer). The protein is Phosphatidylserine decarboxylase proenzyme of Rhizobium rhizogenes (strain K84 / ATCC BAA-868) (Agrobacterium radiobacter).